An 858-amino-acid chain; its full sequence is Zinc finger protein ZXDC (858 aa).

3 disordered regions span residues 1 to 73 (MDLP…GGDS), 85 to 108 (DTHGQEEAEPDSGASPTEQVPAAA), and 142 to 175 (AAPSLHPATTPGLEPSSAAASRRGPVAASAGSPA). Pro residues predominate over residues 59-68 (APGPSPPPPE). Over residues 142–152 (AAPSLHPATTP) the composition is skewed to low complexity. 10 C2H2-type zinc fingers span residues 176-200 (YRCPEPQCALSFAKKHQLKVHLLTH), 209-233 (FKCPLDGCGWAFTTSYKLKRHLQSH), 239-263 (FSCPVGGCGKKFTTVYNLKAHMKGH), 269-291 (FKCEVCAERFPTHAKLNSHQRSH), 298-322 (YKCDFPGCEKTFITVSALFSHNRAH), 329-353 (FSCSFPGCNKQYDKACRLKIHLRSH), 359-383 (FICDSDSCGWTFTSMSKLLRHKRKH), 389-413 (FTCPVEGCGKSFTRAEHLKGHSITH), 419-443 (FECPVEGCCARFSARSSLYIHSKKH), and 452-477 (SRCPVSSCNRLFTSKHSMKAHVVRQH). Residues 624–634 (DSPALTPSNNL) are compositionally biased toward polar residues. Residues 624 to 652 (DSPALTPSNNLTAPGTTPTSSDTTQETGS) are disordered. A compositionally biased stretch (low complexity) spans 635 to 651 (TAPGTTPTSSDTTQETG). A Glycyl lysine isopeptide (Lys-Gly) (interchain with G-Cter in SUMO) cross-link involves residue Lys661. 2 disordered regions span residues 671 to 714 (DVVQ…LESG) and 727 to 751 (VKKKKQKGTGSDEGASDSAHRKVKG). Over residues 681-692 (GPSQSVLSSSTE) the composition is skewed to polar residues.

This sequence belongs to the ZXD family. As to quaternary structure, self-associates. Interacts with ZXDB and CIITA. Post-translationally, sumoylated at Lys-661 with SUMO1, SUMO2 and SUMO3; sumoylation enhances the activity of the transcriptional activation domain.

Its subcellular location is the nucleus. Cooperates with CIITA to promote transcription of MHC class I and MHC class II genes. This Mus musculus (Mouse) protein is Zinc finger protein ZXDC (Zxdc).